A 342-amino-acid polypeptide reads, in one-letter code: S-adenosyl-L-methionine-dependent tRNA 4-demethylwyosine synthase (342 aa).

[2Fe-2S] cluster contacts are provided by cysteine 45, cysteine 58, and cysteine 71. In terms of domain architecture, Radical SAM core spans tyrosine 64–glutamate 312. [4Fe-4S] cluster contacts are provided by cysteine 81, cysteine 85, and cysteine 88.

The protein belongs to the TYW1 family. In terms of assembly, monomer. The cofactor is [2Fe-2S] cluster. It depends on [4Fe-4S] cluster as a cofactor.

It localises to the cytoplasm. It carries out the reaction N(1)-methylguanosine(37) in tRNA(Phe) + pyruvate + S-adenosyl-L-methionine = 4-demethylwyosine(37) in tRNA(Phe) + 5'-deoxyadenosine + L-methionine + CO2 + H2O. Component of the wyosine derivatives biosynthesis pathway that catalyzes the condensation of N-methylguanine with 2 carbon atoms from pyruvate to form the tricyclic 4-demethylwyosine (imG-14) on guanosine-37 of tRNA(Phe). The polypeptide is S-adenosyl-L-methionine-dependent tRNA 4-demethylwyosine synthase (Pyrococcus horikoshii (strain ATCC 700860 / DSM 12428 / JCM 9974 / NBRC 100139 / OT-3)).